Here is a 375-residue protein sequence, read N- to C-terminus: Homeobox protein Meis3 (375 aa).

The disordered stretch occupies residues 25-51 (PETVPAVPGPYGPHRPPQPLPPGLDSD). The segment covering 31-46 (VPGPYGPHRPPQPLPP) has biased composition (pro residues). Positions 96–179 (GGDVCSSDSF…PIDLVIEDRD (84 aa)) constitute an MEIS N-terminal domain. Disordered regions lie at residues 197–268 (PDQN…KRGI) and 329–348 (NRTG…GGYT). Over residues 227–241 (SQSGDNSSDQGDGLD) the composition is skewed to low complexity. A DNA-binding region (homeobox; TALE-type) is located at residues 262 to 324 (RNKKRGIFPK…NARRRIVQPM (63 aa)).

The protein belongs to the TALE/MEIS homeobox family.

The protein localises to the nucleus. Transcriptional regulator which directly modulates PDPK1 expression, thus promoting survival of pancreatic beta-cells. Also regulates expression of NDFIP1, BNIP3, and CCNG1. This Homo sapiens (Human) protein is Homeobox protein Meis3 (MEIS3).